The following is an 87-amino-acid chain: UPF0250 protein PC1_1177 (87 aa).

Belongs to the UPF0250 family.

The polypeptide is UPF0250 protein PC1_1177 (Pectobacterium carotovorum subsp. carotovorum (strain PC1)).